Reading from the N-terminus, the 360-residue chain is Phosphoserine aminotransferase (360 aa).

Residue R41 participates in L-glutamate binding. W101, T152, D172, and Q195 together coordinate pyridoxal 5'-phosphate. N6-(pyridoxal phosphate)lysine is present on K196. 237-238 provides a ligand contact to pyridoxal 5'-phosphate; it reads NT.

It belongs to the class-V pyridoxal-phosphate-dependent aminotransferase family. SerC subfamily. In terms of assembly, homodimer. Requires pyridoxal 5'-phosphate as cofactor.

The protein resides in the cytoplasm. The catalysed reaction is O-phospho-L-serine + 2-oxoglutarate = 3-phosphooxypyruvate + L-glutamate. It catalyses the reaction 4-(phosphooxy)-L-threonine + 2-oxoglutarate = (R)-3-hydroxy-2-oxo-4-phosphooxybutanoate + L-glutamate. It participates in amino-acid biosynthesis; L-serine biosynthesis; L-serine from 3-phospho-D-glycerate: step 2/3. The protein operates within cofactor biosynthesis; pyridoxine 5'-phosphate biosynthesis; pyridoxine 5'-phosphate from D-erythrose 4-phosphate: step 3/5. Functionally, catalyzes the reversible conversion of 3-phosphohydroxypyruvate to phosphoserine and of 3-hydroxy-2-oxo-4-phosphonooxybutanoate to phosphohydroxythreonine. The polypeptide is Phosphoserine aminotransferase (Paraburkholderia phymatum (strain DSM 17167 / CIP 108236 / LMG 21445 / STM815) (Burkholderia phymatum)).